The primary structure comprises 128 residues: Protein C10 (128 aa).

Belongs to the UPF0456 family.

The protein localises to the cytoplasm. This chain is Protein C10, found in Xenopus tropicalis (Western clawed frog).